The following is a 351-amino-acid chain: Biotin synthase (351 aa).

The Radical SAM core domain occupies 49–265; the sequence is NRVRIHILDN…LSVFRLVNPD (217 aa). [4Fe-4S] cluster contacts are provided by Cys-64, Cys-68, and Cys-71. [2Fe-2S] cluster is bound by residues Cys-108, Cys-140, Cys-200, and Arg-269.

The protein belongs to the radical SAM superfamily. Biotin synthase family. In terms of assembly, homodimer. Requires [4Fe-4S] cluster as cofactor. [2Fe-2S] cluster serves as cofactor.

It catalyses the reaction (4R,5S)-dethiobiotin + (sulfur carrier)-SH + 2 reduced [2Fe-2S]-[ferredoxin] + 2 S-adenosyl-L-methionine = (sulfur carrier)-H + biotin + 2 5'-deoxyadenosine + 2 L-methionine + 2 oxidized [2Fe-2S]-[ferredoxin]. It functions in the pathway cofactor biosynthesis; biotin biosynthesis; biotin from 7,8-diaminononanoate: step 2/2. In terms of biological role, catalyzes the conversion of dethiobiotin (DTB) to biotin by the insertion of a sulfur atom into dethiobiotin via a radical-based mechanism. This is Biotin synthase from Leptospira biflexa serovar Patoc (strain Patoc 1 / Ames).